A 451-amino-acid polypeptide reads, in one-letter code: UBP1-associated protein 2B (451 aa).

Residues 1 to 86 (MTKKRKLESE…GNEDDDEEEP (86 aa)) form a disordered region. Composition is skewed to basic and acidic residues over residues 25-38 (CEKE…VDNQ) and 49-63 (DTLK…KGED). Residues 67-77 (AETSSGSGNQG) show a composition bias toward polar residues. RRM domains lie at 128–236 (RKIF…NVSA) and 227–314 (RKIY…QHQH). 2 disordered regions span residues 302 to 335 (ANDG…GYGA) and 423 to 451 (GGYQ…YMGR). Residues 431-451 (GQGGAGRGQHGAGYGGPYMGR) are compositionally biased toward gly residues.

Expressed in shoot meristem and flowers.

Its subcellular location is the nucleus. Functionally, heterogeneous nuclear ribonucleoprotein (hnRNP)-like protein that acts as a component of a complex regulating the turnover of mRNAs in the nucleus. Binds with high affinity to RNA molecules that contain U-rich sequences in 3'-UTRs. May function in complex with UBP1 and contribute to the stabilization of mRNAs in the nucleus. The chain is UBP1-associated protein 2B (UBA2B) from Arabidopsis thaliana (Mouse-ear cress).